The primary structure comprises 267 residues: LexA repressor (267 aa).

Residues 1–44 are disordered; it reads MSIDESSDNPTPRPKLGRPPKSEADKRAEKEAQKDGKKPALSTR. Residues 20–38 are compositionally biased toward basic and acidic residues; the sequence is PKSEADKRAEKEAQKDGKK. Positions 65-85 form a DNA-binding region, H-T-H motif; sequence IREIADAVGLHSTSSVSYHLT. Residues 111–140 are disordered; it reads GQLTNESTKKNAGSPQPTSAAIPEPTTEGE. Residues 112-129 show a composition bias toward polar residues; it reads QLTNESTKKNAGSPQPTS. Catalysis depends on for autocatalytic cleavage activity residues Ser191 and Lys228.

This sequence belongs to the peptidase S24 family. In terms of assembly, homodimer.

The enzyme catalyses Hydrolysis of Ala-|-Gly bond in repressor LexA.. Functionally, represses a number of genes involved in the response to DNA damage (SOS response), including recA and lexA. In the presence of single-stranded DNA, RecA interacts with LexA causing an autocatalytic cleavage which disrupts the DNA-binding part of LexA, leading to derepression of the SOS regulon and eventually DNA repair. This is LexA repressor from Corynebacterium jeikeium (strain K411).